Consider the following 415-residue polypeptide: Probable glucan 1,3-beta-glucosidase A (415 aa).

Residues 1–22 form the signal peptide; it reads MLSRLSQTALVALSLMTVLTEA. Glu-210 functions as the Proton donor in the catalytic mechanism. Cystine bridges form between Cys-290–Cys-414 and Cys-315–Cys-341. The active-site Nucleophile is Glu-307. The interval 335 to 359 is disordered; that stretch reads SPRYGDCGNKRQGSSSGLSEQERSD.

This sequence belongs to the glycosyl hydrolase 5 (cellulase A) family. In terms of assembly, monomer. Mn(2+) is required as a cofactor.

It is found in the secreted. The catalysed reaction is Successive hydrolysis of beta-D-glucose units from the non-reducing ends of (1-&gt;3)-beta-D-glucans, releasing alpha-glucose.. Its function is as follows. Beta-glucanases participate in the metabolism of beta-glucan, the main structural component of the cell wall. It could also function biosynthetically as a transglycosylase. The chain is Probable glucan 1,3-beta-glucosidase A (exgA) from Aspergillus clavatus (strain ATCC 1007 / CBS 513.65 / DSM 816 / NCTC 3887 / NRRL 1 / QM 1276 / 107).